We begin with the raw amino-acid sequence, 504 residues long: Protein psiD (504 aa).

The signal sequence occupies residues Met1–Ser21. Asn87, Asn136, Asn236, Asn252, Asn290, and Asn373 each carry an N-linked (GlcNAc...) asparagine glycan. One can recognise a PA14 domain in the interval Leu111–His251. The span at Thr417–Pro430 shows a compositional bias: low complexity. Residues Thr417–Asp453 are disordered. Residues Thr431–Asp453 show a composition bias toward pro residues. Asn483 carries N-linked (GlcNAc...) asparagine glycosylation.

This sequence belongs to the prespore-cell-inducing factor family.

It localises to the secreted. The protein is Protein psiD (psiD) of Dictyostelium discoideum (Social amoeba).